The following is a 223-amino-acid chain: 7-cyano-7-deazaguanine synthase (223 aa).

An ATP-binding site is contributed by 12-22 (FSGGQDSTTCL). The Zn(2+) site is built by Cys189, Cys198, Cys201, and Cys204.

Belongs to the QueC family. In terms of assembly, homodimer. Requires Zn(2+) as cofactor.

It catalyses the reaction 7-carboxy-7-deazaguanine + NH4(+) + ATP = 7-cyano-7-deazaguanine + ADP + phosphate + H2O + H(+). Its pathway is purine metabolism; 7-cyano-7-deazaguanine biosynthesis. Its function is as follows. Catalyzes the ATP-dependent conversion of 7-carboxy-7-deazaguanine (CDG) to 7-cyano-7-deazaguanine (preQ(0)). This chain is 7-cyano-7-deazaguanine synthase, found in Halalkalibacterium halodurans (strain ATCC BAA-125 / DSM 18197 / FERM 7344 / JCM 9153 / C-125) (Bacillus halodurans).